Here is a 340-residue protein sequence, read N- to C-terminus: 4-hydroxy-2-oxovalerate aldolase (340 aa).

Residues 4–255 form the Pyruvate carboxyltransferase domain; sequence VVIHDPTLRD…ATGIDLYALL (252 aa). Substrate is bound at residue 12–13; it reads RD. Asp-13 serves as a coordination point for Mn(2+). The active-site Proton acceptor is the His-16. Residues Ser-166 and His-194 each contribute to the substrate site. Mn(2+) contacts are provided by His-194 and His-196.

It belongs to the 4-hydroxy-2-oxovalerate aldolase family.

It carries out the reaction (S)-4-hydroxy-2-oxopentanoate = acetaldehyde + pyruvate. The protein is 4-hydroxy-2-oxovalerate aldolase of Streptomyces griseus subsp. griseus (strain JCM 4626 / CBS 651.72 / NBRC 13350 / KCC S-0626 / ISP 5235).